Reading from the N-terminus, the 257-residue chain is 5'-nucleotidase SurE (257 aa).

A divalent metal cation-binding residues include D8, D9, S40, and N92.

This sequence belongs to the SurE nucleotidase family. The cofactor is a divalent metal cation.

It is found in the cytoplasm. It carries out the reaction a ribonucleoside 5'-phosphate + H2O = a ribonucleoside + phosphate. Its function is as follows. Nucleotidase that shows phosphatase activity on nucleoside 5'-monophosphates. The polypeptide is 5'-nucleotidase SurE (Rhizobium rhizogenes (strain K84 / ATCC BAA-868) (Agrobacterium radiobacter)).